Reading from the N-terminus, the 230-residue chain is MGQQISDQTQLVLNKLPEKVAKHVMLVRESGSLTYEEFLGRVAELNDVTAKVASGQEKHLLFEVQPGSDSSAFWKVVVRVVCTKINKSSGIVEASRIMNLYQFIQLYKDITSQAAGVLAQSSTSEDADENSASVTSCQASLWMGRVKQLTDEEECCICMDGRADLILPCAHSFCQKCIDKWSDRHRNCPICRLQMTGANESWVVSDAPTEDDMANYILNMADEAGQPHRP.

The N-myristoyl glycine moiety is linked to residue G2. The RING-type zinc-finger motif lies at 155-192 (CCICMDGRADLILPCAHSFCQKCIDKWSDRHRNCPICR).

It localises to the membrane. Its function is as follows. May be involved in spermatogenesis. This chain is RING finger protein 141 (RNF141), found in Bos taurus (Bovine).